The sequence spans 216 residues: Ras-related protein Rab11A (216 aa).

GTP contacts are provided by residues 19–27, 38–44, 67–71, 125–128, and 155–157; these read GDSGVGKSN, CLESKST, DTAGQ, NKSD, and SAL. Positions 41-49 match the Effector region motif; the sequence is SKSTIGVEF. Residues C213 and C214 are each lipidated (S-geranylgeranyl cysteine).

Belongs to the small GTPase superfamily. Rab family.

The protein resides in the cell membrane. This Nicotiana tabacum (Common tobacco) protein is Ras-related protein Rab11A (RAB11A).